The sequence spans 289 residues: Aquaporin PIP1-2 (289 aa).

The tract at residues 1-36 (MEGKEEDVRLGANKFSERQPIGTAAQGAADDKDYKE) is disordered. The next 2 membrane-spanning stretches (helical) occupy residues 58–78 (IAEFVATFLFLYITILTVMGV) and 93–115 (IAWSFGGMIFALVYCTAGISGGH). An NPA 1 motif is present at residues 117–119 (NPA). The next 3 membrane-spanning stretches (helical) occupy residues 136–156 (LFYIIMQCLGAVCGAGVVKGF), 178–198 (GDGLGAEIVGTFILVYTVFSA), and 212–232 (ILAPLPIGFAVFLVHLATIPI). The NPA 2 motif lies at 238–240 (NPA). A helical membrane pass occupies residues 260–280 (IFWVGPFIGAALAAIYHQVII).

The protein belongs to the MIP/aquaporin (TC 1.A.8) family. PIP (TC 1.A.8.11) subfamily. Interacts with PIP2-1 to form heteromers. Highly expressed in developing tassels and at lower levels in roots, shoots, ears and embryos. Expressed in the root growing zone at 5-6 mm from the root tip. Expressed in xylem parenchyma.

The protein resides in the cell membrane. In terms of biological role, water channel required to facilitate the transport of water across cell membrane. Active as heteromers with PIP1-1, PIP2-1, PIP2-4 or PIP2-5, but not as homomers. This chain is Aquaporin PIP1-2 (PIP1-2), found in Zea mays (Maize).